We begin with the raw amino-acid sequence, 699 residues long: Elongation factor G (699 aa).

The tr-type G domain maps to 8-283 (EHIRNIGICA…AVVDFLPSPI (276 aa)). GTP contacts are provided by residues 17–24 (AHIDAGKT), 81–85 (DTPGH), and 135–138 (NKMD).

Belongs to the TRAFAC class translation factor GTPase superfamily. Classic translation factor GTPase family. EF-G/EF-2 subfamily.

The protein localises to the cytoplasm. In terms of biological role, catalyzes the GTP-dependent ribosomal translocation step during translation elongation. During this step, the ribosome changes from the pre-translocational (PRE) to the post-translocational (POST) state as the newly formed A-site-bound peptidyl-tRNA and P-site-bound deacylated tRNA move to the P and E sites, respectively. Catalyzes the coordinated movement of the two tRNA molecules, the mRNA and conformational changes in the ribosome. This is Elongation factor G from Rickettsia rickettsii (strain Iowa).